The chain runs to 77 residues: MPKRVLQGVVISSKTDKTVTVKVERRFKHPIYKKFIKVSKKYAAHDPNNKFQEGDKVNIIESRPISKTKTWVVINEE.

It belongs to the universal ribosomal protein uS17 family. As to quaternary structure, part of the 30S ribosomal subunit.

One of the primary rRNA binding proteins, it binds specifically to the 5'-end of 16S ribosomal RNA. This Rickettsia bellii (strain OSU 85-389) protein is Small ribosomal subunit protein uS17.